We begin with the raw amino-acid sequence, 463 residues long: Glutamate--tRNA ligase 2 (463 aa).

Residues 11 to 21 (PSPTGYLHIGG) carry the 'HIGH' region motif. The 'KMSKS' region motif lies at 240-244 (KLSKR). An ATP-binding site is contributed by Lys243.

This sequence belongs to the class-I aminoacyl-tRNA synthetase family. Glutamate--tRNA ligase type 1 subfamily. As to quaternary structure, monomer.

It is found in the cytoplasm. The enzyme catalyses tRNA(Glu) + L-glutamate + ATP = L-glutamyl-tRNA(Glu) + AMP + diphosphate. Functionally, catalyzes the attachment of glutamate to tRNA(Glu) in a two-step reaction: glutamate is first activated by ATP to form Glu-AMP and then transferred to the acceptor end of tRNA(Glu). This chain is Glutamate--tRNA ligase 2, found in Campylobacter jejuni subsp. jejuni serotype O:2 (strain ATCC 700819 / NCTC 11168).